Consider the following 408-residue polypeptide: Succinylornithine transaminase (408 aa).

Lys-252 bears the N6-(pyridoxal phosphate)lysine mark.

Belongs to the class-III pyridoxal-phosphate-dependent aminotransferase family. AstC subfamily. The cofactor is pyridoxal 5'-phosphate.

It carries out the reaction N(2)-succinyl-L-ornithine + 2-oxoglutarate = N-succinyl-L-glutamate 5-semialdehyde + L-glutamate. It participates in amino-acid degradation; L-arginine degradation via AST pathway; L-glutamate and succinate from L-arginine: step 3/5. Catalyzes the transamination of N(2)-succinylornithine and alpha-ketoglutarate into N(2)-succinylglutamate semialdehyde and glutamate. Can also act as an acetylornithine aminotransferase. This is Succinylornithine transaminase from Salmonella paratyphi A (strain ATCC 9150 / SARB42).